A 537-amino-acid chain; its full sequence is Tyrosine-protein kinase Fyn (537 aa).

Glycine 2 carries N-myristoyl glycine lipidation. Residues cysteine 3 and cysteine 6 are each lipidated (S-palmitoyl cysteine). Threonine 12 carries the post-translational modification Phosphothreonine; by PKC. The disordered stretch occupies residues 14–35; that stretch reads LTEERDGSLNQSSGYRYGTDPT. Serine 21 and serine 26 each carry phosphoserine. The region spanning 82 to 143 is the SH3 domain; the sequence is TGVTLFVALY…PSNYVAPVDS (62 aa). In terms of domain architecture, SH2 spans 149–246; the sequence is WYFGKLGRKD…GLCCRLVVPC (98 aa). A Phosphotyrosine modification is found at tyrosine 185. The 254-residue stretch at 271–524 folds into the Protein kinase domain; that stretch reads LQLIKRLGNG…YLQGFLEDYF (254 aa). ATP contacts are provided by residues 277–285 and lysine 299; that span reads LGNGQFGEV. Residue aspartate 390 is the Proton acceptor of the active site. A Phosphotyrosine; by autocatalysis modification is found at tyrosine 420. Position 531 is a phosphotyrosine; by CSK (tyrosine 531).

Belongs to the protein kinase superfamily. Tyr protein kinase family. SRC subfamily. As to quaternary structure, interacts (via its SH3 domain) with PIK3R1 and PRMT8. Interacts with FYB1, PAG1, and SH2D1A. Interacts with CD79A (tyrosine-phosphorylated form); the interaction increases FYN activity. Interacts (via SH2 domain) with CSF1R (tyrosine phosphorylated). Interacts with TOM1L1 (phosphorylated form). Interacts with KDR (tyrosine phosphorylated). Interacts (via SH3 domain) with KLHL2 (via N-terminus). Interacts with SH2D1A and SLAMF1. Interacts with ITCH; the interaction phosphorylates ITCH and negatively regulates its activity. Interacts with FASLG. Interacts with RUNX3. Interacts with KIT. Interacts with EPHA8; possible downstream effector of EPHA8 in regulation of cell adhesion. Interacts with PTK2/FAK1; this interaction leads to PTK2/FAK1 phosphorylation and activation. Interacts with CAV1; this interaction couples integrins to the Ras-ERK pathway. Interacts with UNC119. Interacts (via SH2 domain) with PTPRH (phosphorylated form). Interacts with PTPRO (phosphorylated form). Interacts with PTPRB (phosphorylated form). Interacts with FYB2. Interacts with DSCAM. Interacts with SKAP1 and FYB1; this interaction promotes the phosphorylation of CLNK. Interacts with NEDD9; in the presence of PTK2. Mn(2+) serves as cofactor. In terms of processing, autophosphorylated at Tyr-420. Phosphorylation on the C-terminal tail at Tyr-531 by CSK maintains the enzyme in an inactive state. PTPRC/CD45 dephosphorylates Tyr-531 leading to activation. Ultraviolet B (UVB) strongly increase phosphorylation at Thr-12 and kinase activity, and promotes translocation from the cytoplasm to the nucleus. Dephosphorylation at Tyr-420 by PTPN2 negatively regulates T-cell receptor signaling. Phosphorylated at tyrosine residues, which can be enhanced by NTN1. Post-translationally, palmitoylated. Palmitoylation at Cys-3 and Cys-6, probably by ZDHHC21, regulates subcellular location.

Its subcellular location is the cytoplasm. It is found in the nucleus. It localises to the cell membrane. The protein localises to the perikaryon. The catalysed reaction is L-tyrosyl-[protein] + ATP = O-phospho-L-tyrosyl-[protein] + ADP + H(+). Its activity is regulated as follows. Inhibited by phosphorylation of Tyr-531 by leukocyte common antigen and activated by dephosphorylation of this site. Functionally, non-receptor tyrosine-protein kinase that plays a role in many biological processes including regulation of cell growth and survival, cell adhesion, integrin-mediated signaling, cytoskeletal remodeling, cell motility, immune response and axon guidance. Inactive FYN is phosphorylated on its C-terminal tail within the catalytic domain. Following activation by PKA, the protein subsequently associates with PTK2/FAK1, allowing PTK2/FAK1 phosphorylation, activation and targeting to focal adhesions. Involved in the regulation of cell adhesion and motility through phosphorylation of CTNNB1 (beta-catenin) and CTNND1 (delta-catenin). Regulates cytoskeletal remodeling by phosphorylating several proteins including the actin regulator WAS and the microtubule-associated proteins MAP2 and MAPT. Promotes cell survival by phosphorylating AGAP2/PIKE-A and preventing its apoptotic cleavage. Participates in signal transduction pathways that regulate the integrity of the glomerular slit diaphragm (an essential part of the glomerular filter of the kidney) by phosphorylating several slit diaphragm components including NPHS1, KIRREL1 and TRPC6. Plays a role in neural processes by phosphorylating DPYSL2, a multifunctional adapter protein within the central nervous system, ARHGAP32, a regulator for Rho family GTPases implicated in various neural functions, and SNCA, a small pre-synaptic protein. Involved in reelin signaling by mediating phosphorylation of DAB1 following reelin (RELN)-binding to its receptor. Participates in the downstream signaling pathways that lead to T-cell differentiation and proliferation following T-cell receptor (TCR) stimulation. Phosphorylates PTK2B/PYK2 in response to T-cell receptor activation. Also participates in negative feedback regulation of TCR signaling through phosphorylation of PAG1, thereby promoting interaction between PAG1 and CSK and recruitment of CSK to lipid rafts. CSK maintains LCK and FYN in an inactive form. Promotes CD28-induced phosphorylation of VAV1. In mast cells, phosphorylates CLNK after activation of immunoglobulin epsilon receptor signaling. Can also promote CD244-mediated NK cell activation. The sequence is that of Tyrosine-protein kinase Fyn from Bos taurus (Bovine).